A 95-amino-acid polypeptide reads, in one-letter code: MLKSNNTSEATTRKVGDKTAKKVFFRRRKGCPLSVPNAPVIDYKNPELLIKFVSEGGRMLPSRITNVCAKKQRKLNNAIKIARILALLPFVFQAK.

The protein belongs to the bacterial ribosomal protein bS18 family. Part of the 30S ribosomal subunit. Forms a tight heterodimer with protein bS6.

Binds as a heterodimer with protein bS6 to the central domain of the 16S rRNA, where it helps stabilize the platform of the 30S subunit. The chain is Small ribosomal subunit protein bS18 from Rickettsia canadensis (strain McKiel).